We begin with the raw amino-acid sequence, 166 residues long: Putative peroxiredoxin (166 aa).

The Thioredoxin domain occupies 1-166; that stretch reads EIGSTIPNAT…SSAATVLSKL (166 aa). The active-site Cysteine sulfenic acid (-SOH) intermediate is Cys-56. A Microbody targeting signal motif is present at residues 164-166; it reads SKL.

Belongs to the peroxiredoxin family. Prx5 subfamily. Homodimer; disulfide-linked, upon oxidation.

It carries out the reaction a hydroperoxide + [thioredoxin]-dithiol = an alcohol + [thioredoxin]-disulfide + H2O. Thiol-specific peroxidase that catalyzes the reduction of hydrogen peroxide and organic hydroperoxides to water and alcohols, respectively. Plays a role in cell protection against oxidative stress by detoxifying peroxides and as sensor of hydrogen peroxide-mediated signaling events. The sequence is that of Putative peroxiredoxin from Malassezia furfur (Pityriasis versicolor infection agent).